Consider the following 100-residue polypeptide: Urease subunit gamma (100 aa).

This sequence belongs to the urease gamma subunit family. As to quaternary structure, heterotrimer of UreA (gamma), UreB (beta) and UreC (alpha) subunits. Three heterotrimers associate to form the active enzyme.

It localises to the cytoplasm. It carries out the reaction urea + 2 H2O + H(+) = hydrogencarbonate + 2 NH4(+). It participates in nitrogen metabolism; urea degradation; CO(2) and NH(3) from urea (urease route): step 1/1. The chain is Urease subunit gamma from Mycolicibacterium vanbaalenii (strain DSM 7251 / JCM 13017 / BCRC 16820 / KCTC 9966 / NRRL B-24157 / PYR-1) (Mycobacterium vanbaalenii).